Consider the following 486-residue polypeptide: Ribulose bisphosphate carboxylase large chain, chromosomal (486 aa).

Residues N126 and T176 each contribute to the substrate site. K178 acts as the Proton acceptor in catalysis. Position 180 (K180) interacts with substrate. Positions 204, 206, and 207 each coordinate Mg(2+). Residue K204 is modified to N6-carboxylysine. Catalysis depends on H296, which acts as the Proton acceptor. Substrate contacts are provided by R297, H329, and S381.

The protein belongs to the RuBisCO large chain family. Type I subfamily. In terms of assembly, heterohexadecamer of 8 large chains and 8 small chains; disulfide-linked. The disulfide link is formed within the large subunit homodimers. Mg(2+) is required as a cofactor. In terms of processing, the disulfide bond which can form between Cys-278 in the large chain dimeric partners within the hexadecamer appears to be associated with oxidative stress and protein turnover.

It carries out the reaction 2 (2R)-3-phosphoglycerate + 2 H(+) = D-ribulose 1,5-bisphosphate + CO2 + H2O. It catalyses the reaction D-ribulose 1,5-bisphosphate + O2 = 2-phosphoglycolate + (2R)-3-phosphoglycerate + 2 H(+). RuBisCO catalyzes two reactions: the carboxylation of D-ribulose 1,5-bisphosphate, the primary event in carbon dioxide fixation, as well as the oxidative fragmentation of the pentose substrate. Both reactions occur simultaneously and in competition at the same active site. The protein is Ribulose bisphosphate carboxylase large chain, chromosomal (cbbL1) of Cupriavidus necator (strain ATCC 17699 / DSM 428 / KCTC 22496 / NCIMB 10442 / H16 / Stanier 337) (Ralstonia eutropha).